The chain runs to 137 residues: Large-conductance mechanosensitive channel (137 aa).

The next 4 helical transmembrane spans lie at 9 to 29 (AFAVKGNVVDMAVGIIIGAAF), 32 to 52 (IVSSFVGDVVMPPIGLLIGGV), 54 to 74 (FGDLAVTLKAAAGDTPAVVLA), and 79 to 99 (IQSIIDFVIIAFAIFMGVKVI).

Belongs to the MscL family. Homopentamer.

It is found in the cell inner membrane. In terms of biological role, channel that opens in response to stretch forces in the membrane lipid bilayer. May participate in the regulation of osmotic pressure changes within the cell. The protein is Large-conductance mechanosensitive channel of Pseudomonas fluorescens (strain ATCC BAA-477 / NRRL B-23932 / Pf-5).